The chain runs to 148 residues: uncharacterized protein (148 aa).

The N-acetyltransferase domain occupies 1–144 (MNIKRITTEA…PHVLMTKEIS (144 aa)).

This is an uncharacterized protein from Bacillus subtilis (strain 168).